The following is a 156-amino-acid chain: uncharacterized protein (156 aa).

Helical transmembrane passes span 21 to 41 (GVLF…AISL), 54 to 74 (TICS…IDFA), and 80 to 100 (SVLV…WALF).

It localises to the membrane. This is an uncharacterized protein from Saccharomyces cerevisiae (strain ATCC 204508 / S288c) (Baker's yeast).